The chain runs to 638 residues: ATP-dependent rRNA helicase spb4 (638 aa).

A Q motif motif is present at residues 14-42; it reads WDGVSPSLSEWVLEAVSSMGFTRMTPVQA. The Helicase ATP-binding domain maps to 45–249; sequence IPLFMAHKDV…RVGLRNPVKV (205 aa). 58-65 contributes to the ATP binding site; sequence AVTGSGKT. A DEAD box motif is present at residues 197-200; sequence DEAD. One can recognise a Helicase C-terminal domain in the interval 283–437; it reads ALKHILHSVD…PISFSESEAT (155 aa). Composition is skewed to basic and acidic residues over residues 534–554 and 577–615; these read LLQE…RKAT and QRRQ…EERR. The tract at residues 534–638 is disordered; it reads LLQESKEGDG…KDEEEFEGFD (105 aa). Residues 566–619 are a coiled coil; that stretch reads RNKKQKRREQKQRRQEKNKWEKMTEEERQKIRETEQMVESIRVKNEEERRLRRA.

Belongs to the DEAD box helicase family. DDX55/SPB4 subfamily. In terms of assembly, component of pre-60S ribosomal complexes.

The protein localises to the nucleus. It is found in the nucleolus. It catalyses the reaction ATP + H2O = ADP + phosphate + H(+). Functionally, ATP-binding RNA helicase involved in the biogenesis of 60S ribosomal subunits. Binds 90S pre-ribosomal particles and dissociates from pre-60S ribosomal particles after processing of 27SB pre-rRNA. Required for the normal formation of 18S rRNA through the processing of pre-rRNAs at sites A0, A1 and A2, and the normal formation of 25S and 5.8S rRNAs through the processing of pre-rRNAs at sites C1 and C2. This is ATP-dependent rRNA helicase spb4 from Aspergillus oryzae (strain ATCC 42149 / RIB 40) (Yellow koji mold).